We begin with the raw amino-acid sequence, 1018 residues long: Ubiquitin carboxyl-terminal hydrolase 35 (1018 aa).

The region spanning 441 to 926 (IGLINLGNTC…TAYVLFYRQR (486 aa)) is the USP domain. The Nucleophile role is filled by Cys-450. 2 disordered regions span residues 544–566 (QKLK…STSV) and 610–757 (RLGS…GSEG). Residues 552 to 561 (PSPPEEPPAP) show a composition bias toward pro residues. At Ser-613 the chain carries Phosphoserine. 3 stretches are compositionally biased toward basic and acidic residues: residues 673–691 (QEER…TEKE), 699–709 (STRGEGEREKE), and 718–728 (KVEKETEKEAE). The active-site Proton acceptor is the His-862. The disordered stretch occupies residues 984–1011 (HWGRGFDEDKDEDEGSPGGCNPAGGNGG). Positions 999 to 1011 (SPGGCNPAGGNGG) are enriched in gly residues.

It belongs to the peptidase C19 family. In terms of assembly, homodimer (via C-terminal region). Interacts with HSP90AA1. Ubiquitinated by CHIP/STUB1 in an HSP90-dependent manner; leading to proteasomal degradation. This ubiquitination can be reversed through auto-deubiquitinating activity. As to expression, expressed in testis, pancreas and skeletal muscle.

The protein resides in the cytoplasm. The protein localises to the mitochondrion. The catalysed reaction is Thiol-dependent hydrolysis of ester, thioester, amide, peptide and isopeptide bonds formed by the C-terminal Gly of ubiquitin (a 76-residue protein attached to proteins as an intracellular targeting signal).. Its function is as follows. Deubiquitinase that plays a role in different processes including cell cycle regulation, mitophagy or endoplasmic reticulum stress. Inhibits TNFalpha-induced NF-kappa-B activation through stabilizing TNIP2 protein via deubiquitination. Plays an essential role during mitosis by deubiquitinating and thereby regulating the levels of Aurora B/AURKB protein. In addition, regulates the protein levels of other key component of the chromosomal passenger complex (CPC) such as survivin/BIRC5 or Borealin/CDCA8 by enhancing their stability. Regulates the degradation of mitochondria through the process of autophagy termed mitophagy. This is Ubiquitin carboxyl-terminal hydrolase 35 (USP35) from Homo sapiens (Human).